A 162-amino-acid polypeptide reads, in one-letter code: Protein-export protein SecB (162 aa).

This sequence belongs to the SecB family. In terms of assembly, homotetramer, a dimer of dimers. One homotetramer interacts with 1 SecA dimer.

It is found in the cytoplasm. Functionally, one of the proteins required for the normal export of preproteins out of the cell cytoplasm. It is a molecular chaperone that binds to a subset of precursor proteins, maintaining them in a translocation-competent state. It also specifically binds to its receptor SecA. The sequence is that of Protein-export protein SecB from Pseudomonas savastanoi pv. phaseolicola (strain 1448A / Race 6) (Pseudomonas syringae pv. phaseolicola (strain 1448A / Race 6)).